Consider the following 691-residue polypeptide: Elongation factor G 2 (691 aa).

One can recognise a tr-type G domain in the interval D8–L287. Residues A17–T24, D85–H89, and N139–D142 each bind GTP.

It belongs to the TRAFAC class translation factor GTPase superfamily. Classic translation factor GTPase family. EF-G/EF-2 subfamily.

It localises to the cytoplasm. Its function is as follows. Catalyzes the GTP-dependent ribosomal translocation step during translation elongation. During this step, the ribosome changes from the pre-translocational (PRE) to the post-translocational (POST) state as the newly formed A-site-bound peptidyl-tRNA and P-site-bound deacylated tRNA move to the P and E sites, respectively. Catalyzes the coordinated movement of the two tRNA molecules, the mRNA and conformational changes in the ribosome. This is Elongation factor G 2 from Myxococcus xanthus (strain DK1622).